The primary structure comprises 958 residues: Coiled-coil domain-containing protein 187 (958 aa).

The segment covering 116–132 (SSVSSGRMSGSSGGHES) has biased composition (low complexity). 4 disordered regions span residues 116 to 160 (SSVS…SDPR), 345 to 447 (ELTR…PRFF), 470 to 492 (QDIS…QRPW), and 510 to 602 (EPSP…KAQA). 2 stretches are compositionally biased toward polar residues: residues 374-398 (LQST…NSSL) and 470-491 (QDIS…SQRP). Positions 536-545 (SSPSSKGKSA) are enriched in low complexity. Residues 718–743 (KQARLQALETMAEALRQRVDILTTKL) adopt a coiled-coil conformation. A disordered region spans residues 916-958 (EVKKEGLVTPWTTRSCGKGEPADRPWAGWSGGQGGLPWASSTA).

The polypeptide is Coiled-coil domain-containing protein 187 (Mus musculus (Mouse)).